Here is a 1004-residue protein sequence, read N- to C-terminus: Cadmium/zinc-transporting ATPase HMA3 (1004 aa).

Residues 42-108 (KKTYLDVLGV…ALNKAGLEAS (67 aa)) form the HMA domain. A run of 8 helical transmembrane segments spans residues 120 to 140 (RWPSPYIVASGVLLTASFFEW), 144 to 164 (PLQCLAVAAVVAGAPPMVRRG), 171 to 191 (LSLDINVLMLIAVAGALCLGD), 193 to 213 (TEAGAIVFLFTTAEWLETLAC), 340 to 360 (CAKYYTPAVVVVAAGVALIPA), 371 to 391 (WKLALVMLVSACPCALVLSTP), 683 to 703 (IAVNVAGSVAVKAAVLALAAA), and 707 to 727 (VLWAAVLADVGTCLLVVLNSM). A disordered region spans residues 931-952 (TGCGASKRSPPAEGSCSGGEGG).

It belongs to the cation transport ATPase (P-type) (TC 3.A.3) family. Type IB subfamily. As to expression, specifically expressed in roots.

The protein resides in the vacuole membrane. It catalyses the reaction Zn(2+)(in) + ATP + H2O = Zn(2+)(out) + ADP + phosphate + H(+). The enzyme catalyses Cd(2+)(in) + ATP + H2O = Cd(2+)(out) + ADP + phosphate + H(+). Root-specific cadmium (Cd) transporter that mediates Cd efflux in root vacuoles. Involved in Cd detoxification by sequestrating Cd into root vacuoles and limiting translocation of Cd from the roots to the shoots, and accumulation in grains. This is Cadmium/zinc-transporting ATPase HMA3 from Oryza sativa subsp. japonica (Rice).